The primary structure comprises 70 residues: Protein SlyX homolog (70 aa).

It belongs to the SlyX family.

The polypeptide is Protein SlyX homolog (Shewanella woodyi (strain ATCC 51908 / MS32)).